The primary structure comprises 187 residues: dCTP deaminase, dUMP-forming (187 aa).

DCTP is bound by residues Lys-99–Arg-104, Asp-117, Thr-125–Glu-127, Gln-146, Tyr-159, Lys-166, and Gln-170. The Proton donor/acceptor role is filled by Glu-127.

Belongs to the dCTP deaminase family. Homotrimer.

It catalyses the reaction dCTP + 2 H2O = dUMP + NH4(+) + diphosphate. It functions in the pathway pyrimidine metabolism; dUMP biosynthesis; dUMP from dCTP: step 1/1. Bifunctional enzyme that catalyzes both the deamination of dCTP to dUTP and the hydrolysis of dUTP to dUMP without releasing the toxic dUTP intermediate. The sequence is that of dCTP deaminase, dUMP-forming from Methanoculleus marisnigri (strain ATCC 35101 / DSM 1498 / JR1).